Here is a 159-residue protein sequence, read N- to C-terminus: MADS-box transcription factor 23 (159 aa).

The region spanning 1–61 (MGRGKIEIKR…SRLYDFASSS (61 aa)) is the MADS-box domain. A K-box domain is found at 86–159 (AKLWQQEAAS…QELSRKVVTT (74 aa)).

Expressed in seedling roots and developing seeds.

The protein localises to the nucleus. Its function is as follows. Probable transcription factor. In Oryza sativa subsp. japonica (Rice), this protein is MADS-box transcription factor 23 (MADS23).